Here is a 568-residue protein sequence, read N- to C-terminus: Protein yellow (568 aa).

A signal peptide spans 1-28 (MHAQDKGGILPALSLLLIAVAMVSPSQA). 2 N-linked (GlcNAc...) asparagine glycosylation sites follow: N151 and N222.

Belongs to the major royal jelly protein family.

The protein resides in the secreted. Controls the pigmentation pattern of the adult cuticle and larval mouth parts. The chain is Protein yellow (y) from Drosophila madeirensis (Fruit fly).